The following is a 111-amino-acid chain: Phosphoribosyl-ATP pyrophosphatase (111 aa).

The protein belongs to the PRA-PH family.

Its subcellular location is the cytoplasm. The catalysed reaction is 1-(5-phospho-beta-D-ribosyl)-ATP + H2O = 1-(5-phospho-beta-D-ribosyl)-5'-AMP + diphosphate + H(+). It functions in the pathway amino-acid biosynthesis; L-histidine biosynthesis; L-histidine from 5-phospho-alpha-D-ribose 1-diphosphate: step 2/9. This is Phosphoribosyl-ATP pyrophosphatase from Ectopseudomonas mendocina (strain ymp) (Pseudomonas mendocina).